The chain runs to 51 residues: MIEKRKDRIVKRLNISISEETYETLQRLKAKTGKTMGQLIEEAVKLLEAEE.

In terms of biological role, this protein is non-essential for virus function. This is an uncharacterized protein from Sulfolobus spindle-shape virus 1 (SSV1).